The following is a 473-amino-acid chain: Ribulose bisphosphate carboxylase large chain 1 (473 aa).

2 residues coordinate substrate: asparagine 116 and threonine 166. Lysine 168 acts as the Proton acceptor in catalysis. Lysine 170 is a binding site for substrate. Mg(2+) contacts are provided by lysine 194, aspartate 196, and glutamate 197. The residue at position 194 (lysine 194) is an N6-carboxylysine. The active-site Proton acceptor is the histidine 287. Arginine 288, histidine 320, and serine 372 together coordinate substrate.

Belongs to the RuBisCO large chain family. Type I subfamily. Heterohexadecamer of 8 large chains and 8 small chains. The cofactor is Mg(2+).

It carries out the reaction 2 (2R)-3-phosphoglycerate + 2 H(+) = D-ribulose 1,5-bisphosphate + CO2 + H2O. The enzyme catalyses D-ribulose 1,5-bisphosphate + O2 = 2-phosphoglycolate + (2R)-3-phosphoglycerate + 2 H(+). In terms of biological role, ruBisCO catalyzes two reactions: the carboxylation of D-ribulose 1,5-bisphosphate, the primary event in carbon dioxide fixation, as well as the oxidative fragmentation of the pentose substrate. Both reactions occur simultaneously and in competition at the same active site. In Nitrobacter winogradskyi (strain ATCC 25391 / DSM 10237 / CIP 104748 / NCIMB 11846 / Nb-255), this protein is Ribulose bisphosphate carboxylase large chain 1.